The following is a 255-amino-acid chain: UPF0246 protein CC_3385 (255 aa).

This sequence belongs to the UPF0246 family.

The protein is UPF0246 protein CC_3385 of Caulobacter vibrioides (strain ATCC 19089 / CIP 103742 / CB 15) (Caulobacter crescentus).